Reading from the N-terminus, the 863-residue chain is DNA replication licensing factor MCM4 (863 aa).

A compositionally biased stretch (low complexity) spans 1–10 (MSSPASTPSR). Disordered stretches follow at residues 1–60 (MSSP…VDLQ) and 91–126 (TYGT…KGLQ). Serine 2 carries the N-acetylserine modification. Residue serine 6 is modified to Phosphoserine; by CDC7. 2 positions are modified to phosphothreonine: threonine 7 and threonine 19. Phosphoserine is present on residues serine 26, serine 31, serine 32, and serine 34. Threonine 102 carries the post-translational modification Phosphothreonine. Serine 105 is subject to Phosphoserine. Phosphothreonine is present on threonine 110. Phosphoserine occurs at positions 120, 131, 142, and 145. Lysine 220 is subject to N6-acetyllysine. Residue lysine 439 forms a Glycyl lysine isopeptide (Lys-Gly) (interchain with G-Cter in SUMO2) linkage. Lysine 450 is modified (N6-acetyllysine). The region spanning 458-667 (IYERLASALA…YDRRLAHHLV (210 aa)) is the MCM domain. Residues tyrosine 471, arginine 497, lysine 516, serine 517, asparagine 618, arginine 643, arginine 732, and glutamate 735 each contribute to the ATP site. Residues 642–645 (SRFD) carry the Arginine finger motif. A Glycyl lysine isopeptide (Lys-Gly) (interchain with G-Cter in SUMO2) cross-link involves residue lysine 798. Lysine 858 is subject to N6-acetyllysine.

The protein belongs to the MCM family. Component of the MCM2-7 complex. The complex forms a toroidal hexameric ring with the proposed subunit order MCM2-MCM6-MCM4-MCM7-MCM3-MCM5. Component of the CMG helicase complex, a hexameric ring of related MCM2-7 subunits stabilized by CDC45 and the tetrameric GINS complex. Interacts with MCMBP. Post-translationally, sumoylated; SUMO2 modified in response to stress caused by inhibition of proteasome activity (in vitro).

The protein resides in the nucleus. It localises to the chromosome. The enzyme catalyses ATP + H2O = ADP + phosphate + H(+). In terms of biological role, acts as a component of the MCM2-7 complex (MCM complex) which is the replicative helicase essential for 'once per cell cycle' DNA replication initiation and elongation in eukaryotic cells. Core component of CDC45-MCM-GINS (CMG) helicase, the molecular machine that unwinds template DNA during replication, and around which the replisome is built. The active ATPase sites in the MCM2-7 ring are formed through the interaction surfaces of two neighboring subunits such that a critical structure of a conserved arginine finger motif is provided in trans relative to the ATP-binding site of the Walker A box of the adjacent subunit. The six ATPase active sites, however, are likely to contribute differentially to the complex helicase activity. The protein is DNA replication licensing factor MCM4 of Homo sapiens (Human).